The chain runs to 438 residues: Minor capsid protein p49 (438 aa).

Positions 134-167 (PQVSGLKDTQKNCLTQPSSLPSLKNPKNSSVPST) are disordered. Over residues 144–167 (KNCLTQPSSLPSLKNPKNSSVPST) the composition is skewed to polar residues.

Belongs to the asfivirus p49 structural protein family.

The protein resides in the virion. Its function is as follows. Together with the penton and the other minor capsid proteins (M1249L, p17), forms a complicated network immediately below the outer capsid shell, stabilizing the whole capsid. Plays an essential role in the formation of infectious virus particles. Especially required for the formation of the capsid vertices. During virion assembly, associates with the membrane and probably mediates the docking of the penton complex to the inner membrane, where it recruits the capsomers to form the penton core. The polypeptide is Minor capsid protein p49 (Ornithodoros (relapsing fever ticks)).